The primary structure comprises 224 residues: dTTP/UTP pyrophosphatase (224 aa).

Asp-77 functions as the Proton acceptor in the catalytic mechanism.

The protein belongs to the Maf family. YhdE subfamily. The cofactor is a divalent metal cation.

Its subcellular location is the cytoplasm. The catalysed reaction is dTTP + H2O = dTMP + diphosphate + H(+). The enzyme catalyses UTP + H2O = UMP + diphosphate + H(+). Functionally, nucleoside triphosphate pyrophosphatase that hydrolyzes dTTP and UTP. May have a dual role in cell division arrest and in preventing the incorporation of modified nucleotides into cellular nucleic acids. The protein is dTTP/UTP pyrophosphatase of Dehalococcoides mccartyi (strain ATCC BAA-2266 / KCTC 15142 / 195) (Dehalococcoides ethenogenes (strain 195)).